The sequence spans 349 residues: Isopentenyl-diphosphate delta-isomerase (349 aa).

6-7 (RK) provides a ligand contact to substrate. Residues 62–64 (AMT), Ser-93, and Asn-122 each bind FMN. Gln-152 serves as a coordination point for substrate. Glu-153 contributes to the Mg(2+) binding site. FMN-binding positions include Lys-184, Thr-214, 258–259 (GG), and 280–281 (AG).

The protein belongs to the IPP isomerase type 2 family. As to quaternary structure, homooctamer. Dimer of tetramers. It depends on FMN as a cofactor. NADPH is required as a cofactor. Mg(2+) serves as cofactor.

The protein resides in the cytoplasm. The enzyme catalyses isopentenyl diphosphate = dimethylallyl diphosphate. Involved in the biosynthesis of isoprenoids. Catalyzes the 1,3-allylic rearrangement of the homoallylic substrate isopentenyl (IPP) to its allylic isomer, dimethylallyl diphosphate (DMAPP). The polypeptide is Isopentenyl-diphosphate delta-isomerase (Bacillus cereus (strain B4264)).